The chain runs to 424 residues: Piriformospora indica-insensitive protein 2 (424 aa).

The N-terminal stretch at 1–21 (MLWQTFFSSLLLLSLLFGCNG) is a signal peptide. 10 LRR repeats span residues 141 to 166 (ASNL…IGNL), 167 to 190 (TKLK…ICNL), 191 to 213 (KRLK…CFKG), 214 to 237 (LKEL…SFGD), 238 to 263 (LVSL…GFLK), 265 to 286 (LTLL…IENI), 287 to 311 (QSLT…NWGK), 312 to 336 (MSNL…LTNL), 337 to 360 (KRLR…KLEA), and 362 to 387 (PCLG…FYEK).

The protein localises to the cell membrane. Functionally, required for growth promotion and enhanced seed production mediated by the endophytic fungus Piriformospora indica. This is Piriformospora indica-insensitive protein 2 (PII-2) from Arabidopsis thaliana (Mouse-ear cress).